A 274-amino-acid polypeptide reads, in one-letter code: 3-methyl-2-oxobutanoate hydroxymethyltransferase (274 aa).

Asp-50 and Asp-89 together coordinate Mg(2+). Residues 50–51 (DS), Asp-89, and Lys-119 each bind 3-methyl-2-oxobutanoate. Residue Glu-121 participates in Mg(2+) binding. Glu-188 functions as the Proton acceptor in the catalytic mechanism.

This sequence belongs to the PanB family. As to quaternary structure, homodecamer; pentamer of dimers. Mg(2+) is required as a cofactor.

The protein resides in the cytoplasm. It catalyses the reaction 3-methyl-2-oxobutanoate + (6R)-5,10-methylene-5,6,7,8-tetrahydrofolate + H2O = 2-dehydropantoate + (6S)-5,6,7,8-tetrahydrofolate. It functions in the pathway cofactor biosynthesis; (R)-pantothenate biosynthesis; (R)-pantoate from 3-methyl-2-oxobutanoate: step 1/2. Its function is as follows. Catalyzes the reversible reaction in which hydroxymethyl group from 5,10-methylenetetrahydrofolate is transferred onto alpha-ketoisovalerate to form ketopantoate. This chain is 3-methyl-2-oxobutanoate hydroxymethyltransferase, found in Methylorubrum extorquens (strain PA1) (Methylobacterium extorquens).